The primary structure comprises 188 residues: Methylamine dehydrogenase light chain (188 aa).

Residues 1–57 (MLGNFRFDDMVEKLSRRVAGRTSRRGAIGRLGTVLAGAALVPLLPVDRRGRVSRANA) constitute a signal peptide (tat-type signal). 6 disulfide bridges follow: C80/C145, C86/C118, C93/C178, C95/C143, C103/C134, and C135/C166. W114 is subject to Tryptophylquinone. A cross-link (tryptophan tryptophylquinone (Trp-Trp)) is located at residues 114-165 (WVASCYNPTDGQSYLIAYRDCCGYNVSGRCPCLNTEGELPVYRPEFANDIIW).

It belongs to the aromatic amine dehydrogenase light chain family. In terms of assembly, heterotetramer of two light and two heavy chains. The cofactor is tryptophan tryptophylquinone residue. Post-translationally, predicted to be exported by the Tat system. The position of the signal peptide cleavage has been experimentally proven. In terms of processing, tryptophan tryptophylquinone (TTQ) is formed by oxidation of the indole ring of a tryptophan to form tryptophylquinone followed by covalent cross-linking with another tryptophan residue.

The protein resides in the periplasm. The catalysed reaction is 2 oxidized [amicyanin] + methylamine + H2O = 2 reduced [amicyanin] + formaldehyde + NH4(+) + 2 H(+). The protein operates within one-carbon metabolism; methylamine degradation; formaldehyde from methylamine: step 1/1. Its function is as follows. Methylamine dehydrogenase carries out the oxidation of methylamine. Electrons are passed from methylamine dehydrogenase to amicyanin. This is Methylamine dehydrogenase light chain (mauA) from Paracoccus versutus (Thiobacillus versutus).